Here is a 192-residue protein sequence, read N- to C-terminus: Peptidyl-tRNA hydrolase (192 aa).

A tRNA-binding site is contributed by Tyr-14. His-19 serves as the catalytic Proton acceptor. Residues Tyr-64, Asn-66, and Asn-112 each contribute to the tRNA site.

This sequence belongs to the PTH family. Monomer.

It localises to the cytoplasm. The catalysed reaction is an N-acyl-L-alpha-aminoacyl-tRNA + H2O = an N-acyl-L-amino acid + a tRNA + H(+). Hydrolyzes ribosome-free peptidyl-tRNAs (with 1 or more amino acids incorporated), which drop off the ribosome during protein synthesis, or as a result of ribosome stalling. Its function is as follows. Catalyzes the release of premature peptidyl moieties from peptidyl-tRNA molecules trapped in stalled 50S ribosomal subunits, and thus maintains levels of free tRNAs and 50S ribosomes. In Prosthecochloris aestuarii (strain DSM 271 / SK 413), this protein is Peptidyl-tRNA hydrolase.